The sequence spans 72 residues: uncharacterized protein (72 aa).

This is an uncharacterized protein from Mycobacterium tuberculosis (strain ATCC 25618 / H37Rv).